A 481-amino-acid chain; its full sequence is Tripartite motif-containing protein 10 (481 aa).

An RING-type zinc finger spans residues 16–61 (CPICQGTLREPVTIDCGHNFCRACLTRYCEIPGPDLEESPTCPLCK). The B box-type zinc-finger motif lies at 94–135 (GEEDVCQEHGEKIYFFCEDDEMQLCVVCREAGEHATHTMRFL). Positions 99, 102, 121, and 127 each coordinate Zn(2+). A coiled-coil region spans residues 150–177 (LKCLRKEREEIQEIQSRENKRMQVLLTQ). The region spanning 292–481 (REMKMFLEKL…GRGSSFSLSS (190 aa)) is the B30.2/SPRY domain.

Belongs to the TRIM/RBCC family. Interacts with IFNAR1; this interaction prevents association of IFNAR1 with TYK2.

The protein localises to the cytoplasm. Functionally, E3 ligase that plays an essential role in the differentiation and survival of terminal erythroid cells. May directly bind to PTEN and promote its ubiquitination, resulting in its proteasomal degradation and activation of hypertrophic signaling. In addition, plays a role in immune response regulation by repressing the phosphorylation of STAT1 and STAT2 in the interferon/JAK/STAT signaling pathway independent of its E3 ligase activity. Mechanistically, interacts with the intracellular domain of IFNAR1 and thereby inhibits the association between TYK2 and IFNAR1. The chain is Tripartite motif-containing protein 10 (TRIM10) from Homo sapiens (Human).